The chain runs to 383 residues: Succinyl-diaminopimelate desuccinylase (383 aa).

Zn(2+) is bound at residue histidine 72. Residue aspartate 74 is part of the active site. Aspartate 105 provides a ligand contact to Zn(2+). Glutamate 137 serves as the catalytic Proton acceptor. Residues glutamate 138, glutamate 167, and histidine 352 each contribute to the Zn(2+) site.

The protein belongs to the peptidase M20A family. DapE subfamily. As to quaternary structure, homodimer. It depends on Zn(2+) as a cofactor. Co(2+) serves as cofactor.

The enzyme catalyses N-succinyl-(2S,6S)-2,6-diaminopimelate + H2O = (2S,6S)-2,6-diaminopimelate + succinate. Its pathway is amino-acid biosynthesis; L-lysine biosynthesis via DAP pathway; LL-2,6-diaminopimelate from (S)-tetrahydrodipicolinate (succinylase route): step 3/3. In terms of biological role, catalyzes the hydrolysis of N-succinyl-L,L-diaminopimelic acid (SDAP), forming succinate and LL-2,6-diaminopimelate (DAP), an intermediate involved in the bacterial biosynthesis of lysine and meso-diaminopimelic acid, an essential component of bacterial cell walls. This is Succinyl-diaminopimelate desuccinylase from Ehrlichia ruminantium (strain Gardel).